Consider the following 360-residue polypeptide: Protein DVR-1 (360 aa).

The N-terminal stretch at 1 to 16 (MVWLRLWAFLHILAIV) is a signal peptide. Positions 17 to 246 (TLDPELKRRE…LRCKRPRRKR (230 aa)) are excised as a propeptide. N-linked (GlcNAc...) asparagine glycans are attached at residues N113, N181, and N301. 3 disulfides stabilise this stretch: C259-C325, C288-C357, and C292-C359.

Belongs to the TGF-beta family. As to quaternary structure, homodimer. Vegetal region of the egg.

It localises to the secreted. Its function is as follows. Serves to facilitate the differentiation of either mesoderm or endoderm either as a cofactor in an instructive signal or by providing permissive environment. This chain is Protein DVR-1 (dvr1), found in Xenopus laevis (African clawed frog).